The primary structure comprises 72 residues: Prokaryotic ubiquitin-like protein Pup (72 aa).

The segment covering 1-10 (MATKDTGGGQ) has biased composition (gly residues). The interval 1–45 (MATKDTGGGQQKATRSTEEVEEQAQDAQASEDLAERQEKLSDDVD) is disordered. Positions 10–60 (QQKATRSTEEVEEQAQDAQASEDLAERQEKLSDDVDSVLDEIDDVLEENAE) form a coiled coil. The interval 28 to 66 (QASEDLAERQEKLSDDVDSVLDEIDDVLEENAEDFVRSF) is ARC ATPase binding. Residues 33-42 (LAERQEKLSD) are compositionally biased toward basic and acidic residues. Gln-72 carries the post-translational modification Deamidated glutamine. An Isoglutamyl lysine isopeptide (Gln-Lys) (interchain with K-? in acceptor proteins) cross-link involves residue Gln-72.

The protein belongs to the prokaryotic ubiquitin-like protein family. In terms of assembly, strongly interacts with the proteasome-associated ATPase ARC through a hydrophobic interface; the interacting region of Pup lies in its C-terminal half. There is one Pup binding site per ARC hexamer ring. Is modified by deamidation of its C-terminal glutamine to glutamate by the deamidase Dop, a prerequisite to the subsequent pupylation process.

It functions in the pathway protein degradation; proteasomal Pup-dependent pathway. Protein modifier that is covalently attached to lysine residues of substrate proteins, thereby targeting them for proteasomal degradation. The tagging system is termed pupylation. The chain is Prokaryotic ubiquitin-like protein Pup from Streptomyces griseus subsp. griseus (strain JCM 4626 / CBS 651.72 / NBRC 13350 / KCC S-0626 / ISP 5235).